A 349-amino-acid chain; its full sequence is Core protein VP7 (349 aa).

N-linked (GlcNAc...) asparagine; by host glycosylation is present at N45.

The protein belongs to the orbivirus VP7 family. In terms of assembly, homotrimer.

The protein resides in the virion. In terms of biological role, major structural core protein; binds to structural protein VP3. Constitutes the surface of the AHSV core. The chain is Core protein VP7 (Segment-7) from Camelus dromedarius (Dromedary).